We begin with the raw amino-acid sequence, 478 residues long: PRAME family member 27 (478 aa).

The LRR 1 repeat unit spans residues 17 to 40 (RSLLRDQALAMSTLEELPTELFPP). Residues 99 to 126 (RWKLQVLDLQDVCENFWMVWSEAMARGS) form an LRR 1; degenerate repeat. One copy of the LRR 2; degenerate repeat lies at 181-205 (HLCCKKLKILGMPFRNIRSILKMVN). An LRR 3; degenerate repeat occupies 206 to 232 (LDCIQEVEVNCKWVLPILTQFTPYLGH). The stretch at 233–268 (MRNLQKLVLSHMDVSRYVSPEQKKEIVTQFTTQFLK) is one LRR 4; degenerate repeat. 5 LRR repeats span residues 269-294 (LHCL…LSCL), 295-326 (KTSL…SQLK), 327-348 (TLDL…ILLE), 351-378 (AATL…ALSR), and 379-403 (CFEL…LLSH).

Belongs to the PRAME family.

In Homo sapiens (Human), this protein is PRAME family member 27.